The primary structure comprises 412 residues: Palmitoyltransferase ZDHHC11 (412 aa).

Over 1–42 (MDTRSGSQCSVTPEAILNNEKLVLPPRISRVNGWSLPLHYFQ) the chain is Cytoplasmic. A helical membrane pass occupies residues 43–63 (VVTWAVFVGLSSATFGIFIPF). Residues 64–69 (LPHAWK) are Lumenal-facing. The chain crosses the membrane as a helical span at residues 70–90 (YIAYVVTGGIFSFHLVVHLIA). The Cytoplasmic segment spans residues 91-176 (SCIDPADSNV…YWFFFSTVAS (86 aa)). Positions 125 to 175 (QFCHLCKVTVNKKTKHCISCNKCVSGFDHHCKWINNCVGSRNYWFFFSTVA) constitute a DHHC domain. Cysteine 155 acts as the S-palmitoyl cysteine intermediate in catalysis. A helical transmembrane segment spans residues 177 to 197 (ATAGMLCLIAILLYVLVQYLV). Residues 198-230 (NPGVLRTDPRYEDVKNMNTWLLFLPLFPVQVQT) lie on the Lumenal side of the membrane. The tract at residues 198-412 (NPGVLRTDPR…MKTDSAESED (215 aa)) is mediates interaction with IRF3 and STING1. The helical transmembrane segment at 231 to 251 (LIVVIIGMLVLLLDFLGLVHL) threads the bilayer. At 252–412 (GQLLIFHIYL…MKTDSAESED (161 aa)) the chain is on the cytoplasmic side. Residues 374–412 (HPDGGSMAQEADDAPSISTLGLQQETTEPMKTDSAESED) are disordered. Residues 389–400 (SISTLGLQQETT) are compositionally biased toward polar residues. Positions 401 to 412 (EPMKTDSAESED) are enriched in basic and acidic residues.

Belongs to the DHHC palmitoyltransferase family. Interacts with IRF3 and STING1; in presence of DNA viruses recruits IRF3 to STING1 promoting IRF3 phosphorylation and activation. Expressed in testis.

It is found in the endoplasmic reticulum membrane. The catalysed reaction is L-cysteinyl-[protein] + hexadecanoyl-CoA = S-hexadecanoyl-L-cysteinyl-[protein] + CoA. Its function is as follows. Endoplasmic reticulum-localized palmitoyltransferase that could catalyze the addition of palmitate onto various protein substrates and be involved in a variety of cellular processes. Has a palmitoyltransferase activity toward NCDN and regulates NCDN association with endosome membranes through this palmitoylation. May play a role in cell proliferation. Also has a palmitoyltransferase activity-independent function in DNA virus-triggered and CGAS-mediated innate immune response. Functions as an adapter that recruits IRF3 to STING1 to promote the activation of that key transcriptional regulator of type I interferon (IFN)-dependent immune response. This chain is Palmitoyltransferase ZDHHC11, found in Homo sapiens (Human).